An 85-amino-acid polypeptide reads, in one-letter code: MKLFLLLVIFASMLNDGLVNADGYIRGSDGCKVSCLWGNDFCDKVCKKSGGSYGYCWTWGLACWCEGLPDNEKWKYESNTCGSKK.

Residues 1–21 (MKLFLLLVIFASMLNDGLVNA) form the signal peptide. One can recognise an LCN-type CS-alpha/beta domain in the interval 22–82 (DGYIRGSDGC…KWKYESNTCG (61 aa)). 4 disulfide bridges follow: cysteine 31–cysteine 81, cysteine 35–cysteine 56, cysteine 42–cysteine 63, and cysteine 46–cysteine 65.

The protein belongs to the long (4 C-C) scorpion toxin superfamily. Sodium channel inhibitor family. Beta subfamily. In terms of tissue distribution, expressed by the venom gland.

Its subcellular location is the secreted. Functionally, depressant insect beta-toxins cause a transient contraction paralysis followed by a slow flaccid paralysis. They bind voltage-independently at site-4 of sodium channels (Nav) and shift the voltage of activation toward more negative potentials thereby affecting sodium channel activation and promoting spontaneous and repetitive firing. This chain is Toxin BmKITc, found in Olivierus martensii (Manchurian scorpion).